A 167-amino-acid polypeptide reads, in one-letter code: Peptide deformylase (167 aa).

The Fe cation site is built by Cys-91 and His-133. Glu-134 is an active-site residue. His-137 serves as a coordination point for Fe cation.

This sequence belongs to the polypeptide deformylase family. Requires Fe(2+) as cofactor.

It carries out the reaction N-terminal N-formyl-L-methionyl-[peptide] + H2O = N-terminal L-methionyl-[peptide] + formate. Removes the formyl group from the N-terminal Met of newly synthesized proteins. Requires at least a dipeptide for an efficient rate of reaction. N-terminal L-methionine is a prerequisite for activity but the enzyme has broad specificity at other positions. This chain is Peptide deformylase, found in Neisseria meningitidis serogroup C (strain 053442).